A 347-amino-acid chain; its full sequence is Holliday junction branch migration complex subunit RuvB (347 aa).

The large ATPase domain (RuvB-L) stretch occupies residues 1-181 (MTRNSLLNPE…FGIPVRLQFY (181 aa)). 9 residues coordinate ATP: Leu20, Arg21, Gly62, Lys65, Thr66, Thr67, Arg171, Tyr181, and Arg218. Thr66 lines the Mg(2+) pocket. Residues 182-252 (SIEELRQVIT…IADEALNRLE (71 aa)) form a small ATPAse domain (RuvB-S) region. The head domain (RuvB-H) stretch occupies residues 255–347 (KLGLDLMDRR…SEIKNQPGLL (93 aa)). The DNA site is built by Arg291, Arg310, and Arg315.

This sequence belongs to the RuvB family. In terms of assembly, homohexamer. Forms an RuvA(8)-RuvB(12)-Holliday junction (HJ) complex. HJ DNA is sandwiched between 2 RuvA tetramers; dsDNA enters through RuvA and exits via RuvB. An RuvB hexamer assembles on each DNA strand where it exits the tetramer. Each RuvB hexamer is contacted by two RuvA subunits (via domain III) on 2 adjacent RuvB subunits; this complex drives branch migration. In the full resolvosome a probable DNA-RuvA(4)-RuvB(12)-RuvC(2) complex forms which resolves the HJ.

It localises to the cytoplasm. It catalyses the reaction ATP + H2O = ADP + phosphate + H(+). In terms of biological role, the RuvA-RuvB-RuvC complex processes Holliday junction (HJ) DNA during genetic recombination and DNA repair, while the RuvA-RuvB complex plays an important role in the rescue of blocked DNA replication forks via replication fork reversal (RFR). RuvA specifically binds to HJ cruciform DNA, conferring on it an open structure. The RuvB hexamer acts as an ATP-dependent pump, pulling dsDNA into and through the RuvAB complex. RuvB forms 2 homohexamers on either side of HJ DNA bound by 1 or 2 RuvA tetramers; 4 subunits per hexamer contact DNA at a time. Coordinated motions by a converter formed by DNA-disengaged RuvB subunits stimulates ATP hydrolysis and nucleotide exchange. Immobilization of the converter enables RuvB to convert the ATP-contained energy into a lever motion, pulling 2 nucleotides of DNA out of the RuvA tetramer per ATP hydrolyzed, thus driving DNA branch migration. The RuvB motors rotate together with the DNA substrate, which together with the progressing nucleotide cycle form the mechanistic basis for DNA recombination by continuous HJ branch migration. Branch migration allows RuvC to scan DNA until it finds its consensus sequence, where it cleaves and resolves cruciform DNA. The polypeptide is Holliday junction branch migration complex subunit RuvB (Zymomonas mobilis subsp. mobilis (strain ATCC 31821 / ZM4 / CP4)).